Consider the following 158-residue polypeptide: Ribosome maturation factor RimP (158 aa).

The protein belongs to the RimP family.

The protein localises to the cytoplasm. Required for maturation of 30S ribosomal subunits. This is Ribosome maturation factor RimP from Pseudomonas fluorescens (strain ATCC BAA-477 / NRRL B-23932 / Pf-5).